Reading from the N-terminus, the 405-residue chain is S-adenosylmethionine synthase (405 aa).

His22 contacts ATP. Asp24 serves as a coordination point for Mg(2+). Residue Glu50 coordinates K(+). 2 residues coordinate L-methionine: Glu63 and Gln107. Positions 107 to 117 (QSPDIAQGVDR) are flexible loop. ATP contacts are provided by residues 184-186 (DGK), 250-251 (RF), Asp259, 265-266 (RK), Ala282, and Lys286. Position 259 (Asp259) interacts with L-methionine. Residue Lys290 coordinates L-methionine.

The protein belongs to the AdoMet synthase family. In terms of assembly, homotetramer; dimer of dimers. Requires Mg(2+) as cofactor. K(+) serves as cofactor.

The protein localises to the cytoplasm. It catalyses the reaction L-methionine + ATP + H2O = S-adenosyl-L-methionine + phosphate + diphosphate. Its pathway is amino-acid biosynthesis; S-adenosyl-L-methionine biosynthesis; S-adenosyl-L-methionine from L-methionine: step 1/1. In terms of biological role, catalyzes the formation of S-adenosylmethionine (AdoMet) from methionine and ATP. The overall synthetic reaction is composed of two sequential steps, AdoMet formation and the subsequent tripolyphosphate hydrolysis which occurs prior to release of AdoMet from the enzyme. The polypeptide is S-adenosylmethionine synthase (Roseiflexus sp. (strain RS-1)).